The chain runs to 245 residues: tRNA pseudouridine synthase A (245 aa).

The active-site Nucleophile is aspartate 52. Tyrosine 111 contacts substrate.

Belongs to the tRNA pseudouridine synthase TruA family. Homodimer.

The enzyme catalyses uridine(38/39/40) in tRNA = pseudouridine(38/39/40) in tRNA. Functionally, formation of pseudouridine at positions 38, 39 and 40 in the anticodon stem and loop of transfer RNAs. The polypeptide is tRNA pseudouridine synthase A (Afipia carboxidovorans (strain ATCC 49405 / DSM 1227 / KCTC 32145 / OM5) (Oligotropha carboxidovorans)).